A 176-amino-acid polypeptide reads, in one-letter code: Immunity factor for TNT homolog (176 aa).

Interacts with the tuberculosis necrotizing toxin (TNT) homolog, the C-terminal domain of the outer membrane channel protein CpnT.

Functionally, antitoxin for tuberculosis necrotizing toxin (TNT) homolog. Acts by binding directly to TNT, which inhibits NAD(+) glycohydrolase activity of TNT and protects M.bovis from self-poisoning. This is Immunity factor for TNT homolog from Mycobacterium bovis (strain BCG / Pasteur 1173P2).